The following is a 455-amino-acid chain: Kynurenine 3-monooxygenase (455 aa).

Belongs to the aromatic-ring hydroxylase family. KMO subfamily. Requires FAD as cofactor.

The enzyme catalyses L-kynurenine + NADPH + O2 + H(+) = 3-hydroxy-L-kynurenine + NADP(+) + H2O. It functions in the pathway cofactor biosynthesis; NAD(+) biosynthesis; quinolinate from L-kynurenine: step 1/3. Catalyzes the hydroxylation of L-kynurenine (L-Kyn) to form 3-hydroxy-L-kynurenine (L-3OHKyn). Required for synthesis of quinolinic acid. This chain is Kynurenine 3-monooxygenase, found in Xanthomonas oryzae pv. oryzae (strain KACC10331 / KXO85).